The following is a 507-amino-acid chain: Steroid 17-alpha-hydroxylase/17,20 lyase (507 aa).

Cysteine 441 serves as a coordination point for heme.

Belongs to the cytochrome P450 family. It depends on heme as a cofactor.

The protein localises to the endoplasmic reticulum membrane. It is found in the microsome membrane. It carries out the reaction a C21-steroid + reduced [NADPH--hemoprotein reductase] + O2 = a 17alpha-hydroxy-C21-steroid + oxidized [NADPH--hemoprotein reductase] + H2O + H(+). The catalysed reaction is progesterone + reduced [NADPH--hemoprotein reductase] + O2 = 17alpha-hydroxyprogesterone + oxidized [NADPH--hemoprotein reductase] + H2O + H(+). The enzyme catalyses pregnenolone + reduced [NADPH--hemoprotein reductase] + O2 = 17alpha-hydroxypregnenolone + oxidized [NADPH--hemoprotein reductase] + H2O + H(+). It catalyses the reaction 17alpha-hydroxyprogesterone + reduced [NADPH--hemoprotein reductase] + O2 = androst-4-ene-3,17-dione + acetate + oxidized [NADPH--hemoprotein reductase] + H2O + 2 H(+). It carries out the reaction 17alpha-hydroxyprogesterone + reduced [NADPH--hemoprotein reductase] + O2 = 16alpha,17alpha-dihydroxyprogesterone + oxidized [NADPH--hemoprotein reductase] + H2O + H(+). The catalysed reaction is 16alpha,17alpha-dihydroxyprogesterone + reduced [NADPH--hemoprotein reductase] + O2 = 6beta,16alpha,17alpha-trihydroxyprogesterone + oxidized [NADPH--hemoprotein reductase] + H2O + H(+). The enzyme catalyses 17alpha-hydroxypregnenolone + reduced [NADPH--hemoprotein reductase] + O2 = 3beta-hydroxyandrost-5-en-17-one + acetate + oxidized [NADPH--hemoprotein reductase] + H2O + 2 H(+). It catalyses the reaction 16alpha,17alpha-dihydroxypregnenolone + reduced [NADPH--hemoprotein reductase] + O2 = 3beta,16alpha-dihydroxy-androst-5-en-17-one + acetate + oxidized [NADPH--hemoprotein reductase] + H2O + 2 H(+). It carries out the reaction 3beta-hydroxyandrost-5-en-17-one + reduced [NADPH--hemoprotein reductase] + O2 = 3beta,16alpha-dihydroxy-androst-5-en-17-one + oxidized [NADPH--hemoprotein reductase] + H2O + H(+). The catalysed reaction is androst-4-ene-3,17-dione + reduced [NADPH--hemoprotein reductase] + O2 = 16alpha-hydroxyandrost-4-ene-3,17-dione + oxidized [NADPH--hemoprotein reductase] + H2O + H(+). Its pathway is steroid hormone biosynthesis. The protein operates within steroid biosynthesis; glucocorticoid biosynthesis. With respect to regulation, regulated predominantly by intracellular cAMP levels. The 17,20-lyase activity is stimulated by cytochrome b5, which acts as an allosteric effector increasing the Vmax of the lyase activity. In terms of biological role, a cytochrome P450 monooxygenase involved in corticoid and androgen biosynthesis. Catalyzes 17-alpha hydroxylation of C21 steroids, which is common for both pathways. A second oxidative step, required only for androgen synthesis, involves an acyl-carbon cleavage. The 17-alpha hydroxy intermediates, as part of adrenal glucocorticoids biosynthesis pathway, are precursors of cortisol. Hydroxylates steroid hormones, pregnenolone and progesterone to form 17-alpha hydroxy metabolites, followed by the cleavage of the C17-C20 bond to form C19 steroids, dehydroepiandrosterone (DHEA) and androstenedione. Has 16-alpha hydroxylase activity. Catalyzes 16-alpha hydroxylation of 17-alpha hydroxy pregnenolone, followed by the cleavage of the C17-C20 bond to form 16-alpha-hydroxy DHEA. Also 16-alpha hydroxylates androgens, relevant for estriol synthesis. Mechanistically, uses molecular oxygen inserting one oxygen atom into a substrate, and reducing the second into a water molecule, with two electrons provided by NADPH via cytochrome P450 reductase (CPR; NADPH-ferrihemoprotein reductase). The protein is Steroid 17-alpha-hydroxylase/17,20 lyase (Cyp17a1) of Rattus norvegicus (Rat).